The chain runs to 212 residues: ER lumen protein-retaining receptor 1 (212 aa).

The Lumenal portion of the chain corresponds to 1 to 4 (MNLF). The helical transmembrane segment at 5–24 (RFLGDLSHLLAIILLLLKIW) threads the bilayer. Residues 25–32 (KSRSCAGI) are Cytoplasmic-facing. The helical transmembrane segment at 33–52 (SGKSQVLFAVVFTARYLDLF) threads the bilayer. An interaction with the K-D-E-L motif on target proteins region spans residues 47 to 48 (RY). Topologically, residues 53-58 (TNYISL) are lumenal. Residues 59–79 (YNTCMKVVYIACSFTTVWMIY) form a helical membrane-spanning segment. Topologically, residues 80 to 92 (SKFKATYDGNHDT) are cytoplasmic. A helical transmembrane segment spans residues 93-110 (FRVEFLVVPTAILAFLVN). The Lumenal portion of the chain corresponds to 111-116 (HDFTPL). The helical transmembrane segment at 117–135 (EILWTFSIYLESVAILPQL) threads the bilayer. The Cytoplasmic segment spans residues 136–149 (FMVSKTGEAETITS). The chain crosses the membrane as a helical span at residues 150 to 168 (HYLFALGVYRTLYLFNWIW). The tract at residues 159-169 (RTLYLFNWIWR) is interaction with the K-D-E-L motif on target proteins. At 169 to 178 (RYHFEGFFDL) the chain is on the lumenal side. A helical transmembrane segment spans residues 179–199 (IAIVAGLVQTVLYCDFFYLYI). Residues 200 to 212 (TKVLKGKKLSLPA) lie on the Cytoplasmic side of the membrane. Residues 204 to 207 (KGKK) are important for recycling of cargo proteins with the sequence motif K-D-E-L from the Golgi to the endoplasmic reticulum. Ser209 carries the phosphoserine; by PKA modification.

This sequence belongs to the ERD2 family. As to quaternary structure, upon ligand binding the receptor oligomerizes and interacts with components of the transport machinery such as ARFGAP1 and ARF1. In terms of processing, phosphorylation by PKA at Ser-209 is required for endoplasmic reticulum retention function.

It localises to the golgi apparatus membrane. The protein localises to the cytoplasmic vesicle. The protein resides in the COPI-coated vesicle membrane. Its subcellular location is the endoplasmic reticulum membrane. It is found in the endoplasmic reticulum-Golgi intermediate compartment membrane. Functionally, receptor for the C-terminal sequence motif K-D-E-L that is present on endoplasmic reticulum resident proteins and that mediates their recycling from the Golgi back to the endoplasmic reticulum. The sequence is that of ER lumen protein-retaining receptor 1 (Kdelr1) from Mus musculus (Mouse).